We begin with the raw amino-acid sequence, 264 residues long: Glutamate racemase 2 (264 aa).

Residues D10–S11 and Y42–G43 each bind substrate. Catalysis depends on C73, which acts as the Proton donor/acceptor. N74–T75 contributes to the substrate binding site. The Proton donor/acceptor role is filled by C181. T182–H183 provides a ligand contact to substrate.

This sequence belongs to the aspartate/glutamate racemases family.

The catalysed reaction is L-glutamate = D-glutamate. Its pathway is cell wall biogenesis; peptidoglycan biosynthesis. Its function is as follows. Provides the (R)-glutamate required for cell wall biosynthesis. This is Glutamate racemase 2 from Caldanaerobacter subterraneus subsp. tengcongensis (strain DSM 15242 / JCM 11007 / NBRC 100824 / MB4) (Thermoanaerobacter tengcongensis).